The chain runs to 269 residues: Formamidopyrimidine-DNA glycosylase (269 aa).

The Schiff-base intermediate with DNA role is filled by proline 2. The active-site Proton donor is glutamate 3. Lysine 57 acts as the Proton donor; for beta-elimination activity in catalysis. Residues histidine 90, arginine 109, and lysine 150 each contribute to the DNA site. The FPG-type zinc-finger motif lies at 235 to 269 (QVYGRKGEPCRVCGTPIVATKHAQRATFYCRHCQK). Catalysis depends on arginine 259, which acts as the Proton donor; for delta-elimination activity.

This sequence belongs to the FPG family. Monomer. Zn(2+) serves as cofactor.

The enzyme catalyses Hydrolysis of DNA containing ring-opened 7-methylguanine residues, releasing 2,6-diamino-4-hydroxy-5-(N-methyl)formamidopyrimidine.. It catalyses the reaction 2'-deoxyribonucleotide-(2'-deoxyribose 5'-phosphate)-2'-deoxyribonucleotide-DNA = a 3'-end 2'-deoxyribonucleotide-(2,3-dehydro-2,3-deoxyribose 5'-phosphate)-DNA + a 5'-end 5'-phospho-2'-deoxyribonucleoside-DNA + H(+). Functionally, involved in base excision repair of DNA damaged by oxidation or by mutagenic agents. Acts as a DNA glycosylase that recognizes and removes damaged bases. Has a preference for oxidized purines, such as 7,8-dihydro-8-oxoguanine (8-oxoG). Has AP (apurinic/apyrimidinic) lyase activity and introduces nicks in the DNA strand. Cleaves the DNA backbone by beta-delta elimination to generate a single-strand break at the site of the removed base with both 3'- and 5'-phosphates. The sequence is that of Formamidopyrimidine-DNA glycosylase from Salmonella enteritidis PT4 (strain P125109).